Reading from the N-terminus, the 186-residue chain is Tumor necrosis factor, alpha-induced protein 8-like protein 2 B (186 aa).

This sequence belongs to the TNFAIP8 family. TNFAIP8L2 subfamily.

Functionally, acts as a negative regulator of innate and adaptive immunity by maintaining immune homeostasis. Negative regulator of Toll-like receptor and T-cell receptor function. Prevents hyperresponsiveness of the immune system and maintains immune homeostasis. Inhibits jun/ap1 and NF-kappa-B activation. Promotes Fas-induced apoptosis. The chain is Tumor necrosis factor, alpha-induced protein 8-like protein 2 B (tnfaip8l2b) from Danio rerio (Zebrafish).